The chain runs to 329 residues: MAFTPFPPRQPAASARLPLTLISLEDWALATITGPDSEKYLQGQVTADVTELGENQHLLVAHCDAKGKMWSNLRLFRHGDGFAWIERRSVRDTQLAEMKKYAVFSKVTIAPNDDAVLLGVAGFQARAALANHFATLPDEQNPRVVDGATTLLWFGLPAERFMVITDAETASQLSDKLHGEAQLNASAQWLALDIEAGFPVIDAPNSNQFIPQATNIQALGGISFKKGCYAGQEMVARAKFRGANKRSLWYLAGHGSRVPQPGEDIEMQMGENWRRTGTVLAAVQLDDGRLLAQVVMNNDLETGTLFRVREESGAHTLHIEPLPYSLEEA.

Residues Trp27 and Trp189 each contribute to the folate site.

Belongs to the tRNA-modifying YgfZ family.

It is found in the cytoplasm. Functionally, folate-binding protein involved in regulating the level of ATP-DnaA and in the modification of some tRNAs. It is probably a key factor in regulatory networks that act via tRNA modification, such as initiation of chromosomal replication. In Cronobacter sakazakii (strain ATCC BAA-894) (Enterobacter sakazakii), this protein is tRNA-modifying protein YgfZ.